A 223-amino-acid chain; its full sequence is Type III pantothenate kinase (223 aa).

17-24 (DIGNTHIH) lines the ATP pocket. Residues tyrosine 81 and 85-88 (GIDR) contribute to the substrate site. The Proton acceptor role is filled by aspartate 87. K(+) is bound at residue aspartate 102. Residue serine 105 coordinates ATP. Residue threonine 157 coordinates substrate.

The protein belongs to the type III pantothenate kinase family. Homodimer. It depends on NH4(+) as a cofactor. K(+) is required as a cofactor.

The protein localises to the cytoplasm. It carries out the reaction (R)-pantothenate + ATP = (R)-4'-phosphopantothenate + ADP + H(+). It functions in the pathway cofactor biosynthesis; coenzyme A biosynthesis; CoA from (R)-pantothenate: step 1/5. Catalyzes the phosphorylation of pantothenate (Pan), the first step in CoA biosynthesis. The protein is Type III pantothenate kinase of Helicobacter pylori (strain HPAG1).